The following is a 653-amino-acid chain: MRTPCSQHRRDRPSAIGSQLPDADTLDTRQPPLQEIPISSFADKTFTAPAQIRNFCIIAHIDHGKSTLADRMLQLTGVVDERSMRAQYLDRMDIERERGITIKAQNVRLPWRVDKTDYVLHLIDTPGHVDFTYEVSRALEACEGAVLLVDAAQGIEAQTLANLYLALDRDLHIIPVLNKIDLPAADPDRYAAEMAHIIGCEPAEVLRVSGKTGEGVSDLLDEVVRQVPPPQGDAEAPTRAMIFDSVYDIYRGVVTYVRVVDGKISPRERIMMMSTGATHELLEVGIVSPEPKPCEGLGVGEVGYLITGVKDVRQSKVGDTVTSLSRARGAAAEALTGYREPKPMVYSGLYPVDGSDYPNLRDALDKLQLNDAALTYEPETSVALGFGFRCGFLGLLHMEITRERLEREFGLDLISTSPNVVYRVHKDDGTEIRVTNPSDWPEGKIRTVYEPVVKTTIIAPSEFIGTIMELCQSRRGELGGMDYLSPERVELRYTMPLGEIIFDFFDALKSRTRGYASLDYEEAGEQEAALVKVDILLQGEAVDAFSAIVHKDTAYAYGNKMTTKLKELIPRQQFEVPVQAAIGSKIIARENIRAIRKDVLSKCYGGDITRKRKLLEKQKEGKKRMKTIGRVEVPQEAFVAALSTDAAGDKGKK.

A disordered region spans residues 1-30; sequence MRTPCSQHRRDRPSAIGSQLPDADTLDTRQ. One can recognise a tr-type G domain in the interval 50-231; the sequence is AQIRNFCIIA…EVVRQVPPPQ (182 aa). GTP contacts are provided by residues 62–67 and 178–181; these read DHGKST and NKID.

The protein belongs to the TRAFAC class translation factor GTPase superfamily. Classic translation factor GTPase family. LepA subfamily.

Its subcellular location is the cell membrane. It catalyses the reaction GTP + H2O = GDP + phosphate + H(+). Its function is as follows. Required for accurate and efficient protein synthesis under certain stress conditions. May act as a fidelity factor of the translation reaction, by catalyzing a one-codon backward translocation of tRNAs on improperly translocated ribosomes. Back-translocation proceeds from a post-translocation (POST) complex to a pre-translocation (PRE) complex, thus giving elongation factor G a second chance to translocate the tRNAs correctly. Binds to ribosomes in a GTP-dependent manner. This is Elongation factor 4 from Mycobacterium bovis (strain ATCC BAA-935 / AF2122/97).